The primary structure comprises 260 residues: MATGAEQTGGGFPVDPLHQFVVQPLIPLNIGGLDASFTNASLWMVVTVVAIGLFMTLGMRSGAMVPGRMQSVVESFYTFIANMVRDNAGHDAMRFFPFIFSLFMFIFFANMIGMFPYAFTVTSHIVVTFALAIVVFLGVTLTGFVLHGPRFLKVFVPSGVPMALLPLVVAIEIISYFSRPISHSVRLFANMLAGHIMLKVFAGFVLTFMTMGVVGWAGMILPLFMIVALTALEFLVAALQAYVFTILTCMYLHDALHPGH.

A run of 6 helical transmembrane segments spans residues Phe-37–Leu-57, Phe-95–Phe-115, Ile-125–Val-145, Val-154–Ile-174, Met-191–Met-211, and Glu-233–His-253.

Belongs to the ATPase A chain family. F-type ATPases have 2 components, CF(1) - the catalytic core - and CF(0) - the membrane proton channel. CF(1) has five subunits: alpha(3), beta(3), gamma(1), delta(1), epsilon(1). CF(0) has three main subunits: a(1), b(2) and c(9-12). The alpha and beta chains form an alternating ring which encloses part of the gamma chain. CF(1) is attached to CF(0) by a central stalk formed by the gamma and epsilon chains, while a peripheral stalk is formed by the delta and b chains.

The protein localises to the cell inner membrane. Functionally, key component of the proton channel; it plays a direct role in the translocation of protons across the membrane. This is ATP synthase subunit a from Parvibaculum lavamentivorans (strain DS-1 / DSM 13023 / NCIMB 13966).